The sequence spans 784 residues: MQRLTELATALGAFLGLLAVAAMAGPNFPQIDTPNMLPAHHRQKRDWIWNQMHIDEEKNESLPHYVGKIKSNVNRQNAKYVLQGEFAGKIFGVDANTGNVLAYERLDREKVSEYFLTALIVDKNTNKNLEQPSSFTVKVHDINDNWPVFSHQVFNASVPEMSAIGTSVIRVTAVDADDPTVAGHATVLYQIVKGNEYFSIDNSGLIFTKIKNLDREKQAEYKIVVETQDALGLRGESGTATVMIRLEDINDNFPVFTQSTYTFSVPEDIRVGKPLGFLTVVDPDEPQNRMTKYSIMQGEYRDTFTIETDPKRNEGIIKPTKSLDYEVIQQYTFYIEATDPTIRYEYLSSTSGKNKAMVTINVLDVDEPPVFQRHFYHFKLPENQKKPLIGTVVAKDPDKAQRSIGYSIRKTSDRGQFFRITKQGNIYNEKELDRETYAWYNLTVEANELDSRGNPVGKESIVQVYIEVLDENDNPPEFAQPYEPKVCENAAQGKLVVQISATDKDVVPVNPKFKFALKNEDSNFTLINNHDNTANITVKYGQFNREHAKFHYLPVLISDNGVPSLTGTSTLTVGVCKCNEQGEFTFCEEMAAQAGVSIQALVAIFLCILTITVITLLIILRRRIRKQAHAHSKSALEIHEQLVTYDEEGGGEMDTTSYDVSVLNSVRGGSTKPLRSTMDARPAVYTQVQKPPRLAPGLHGGPREMATMIDVKKEEADNDGGGPPYDTLHIYGYEGAESIAESLSSLSTNSSDSDIDYDFLNDWGPRFKMLAELYGSDPQEELII.

The first 24 residues, 1–24 (MQRLTELATALGAFLGLLAVAAMA), serve as a signal peptide directing secretion. The propeptide occupies 25–45 (GPNFPQIDTPNMLPAHHRQKR). Cadherin domains lie at 46 to 149 (DWIW…WPVF), 150 to 256 (SHQV…FPVF), 257 to 371 (TQST…PPVF), 372 to 476 (QRHF…DNPP), and 477 to 593 (EFAQ…MAAQ). Topologically, residues 46–599 (DWIWNQMHID…MAAQAGVSIQ (554 aa)) are extracellular. Positions 56 and 57 each coordinate Ca(2+). The N-linked (GlcNAc...) asparagine glycan is linked to Asn-59. Residues Asp-107, Glu-109, Asp-141, Ile-142, Asn-143, Asp-144, and Asn-145 each coordinate Ca(2+). N-linked (GlcNAc...) asparagine glycosylation occurs at Asn-155. The Ca(2+) site is built by Asp-175, Asp-177, His-184, and Asp-229. N-linked (GlcNAc...) asparagine glycosylation is found at Asn-441, Asn-523, and Asn-535. The chain crosses the membrane as a helical span at residues 600–620 (ALVAIFLCILTITVITLLIIL). Positions 621–660 (RRRIRKQAHAHSKSALEIHEQLVTYDEEGGGEMDTTSYDV) are required for interaction with PALS1. Residues 621–784 (RRRIRKQAHA…GSDPQEELII (164 aa)) lie on the Cytoplasmic side of the membrane.

Part of a complex composed of AMOTL2, MAGI1 and CDH5, within the complex AMOTL2 acts as a scaffold protein for the interaction of MAGI1 with CDH5. The complex is required for coupling actin fibers to cell junctions in endothelial cells. Within the complex AMOTL2 (via its N-terminus) interacts with CDH5. Interacts (via cadherin 5 domain) with PTPRB. Interacts with TRPC4. Interacts with KRIT1. Interacts with PARD3. Interacts with RTN4 (isoform B). Interacts with PALS1; the interaction promotes PALS1 localization to cell junctions and is required for CDH5-mediated vascular lumen formation and endothelial cell polarity. Interacts with CTNND1/p120-catenin; the interaction controls CADH5 endocytosis. Phosphorylated on tyrosine residues by KDR/VEGFR-2. Dephosphorylated by PTPRB. Post-translationally, O-glycosylated. Expressed in postnatal endothelial cells of the retinal vascular plexus (at protein level).

Its subcellular location is the cell junction. It localises to the adherens junction. It is found in the cell membrane. The protein resides in the cytoplasm. In terms of biological role, cadherins are calcium-dependent cell adhesion proteins. They preferentially interact with themselves in a homophilic manner in connecting cells; cadherins may thus contribute to the sorting of heterogeneous cell types. This cadherin may play an important role in endothelial cell biology through control of the cohesion and organization of the intercellular junctions. It associates with alpha-catenin forming a link to the cytoskeleton. Plays a role in coupling actin fibers to cell junctions in endothelial cells, via acting as a cell junctional complex anchor for AMOTL2 and MAGI1. Acts in concert with KRIT1 and PALS1 to establish and maintain correct endothelial cell polarity and vascular lumen. These effects are mediated by recruitment and activation of the Par polarity complex and RAP1B. Required for activation of PRKCZ and for localization of phosphorylated PRKCZ, PARD3, TIAM1 and RAP1B to the cell junction. Associates with CTNND1/p120-catenin to control CADH5 endocytosis. The polypeptide is Cadherin-5 (Mus musculus (Mouse)).